We begin with the raw amino-acid sequence, 332 residues long: Melanocortin receptor 4 (332 aa).

Topologically, residues 1–43 (MNSTHHHGMHTSLHFWNRSTYGLHSNASEPLGKGYSEGGCYEQ) are extracellular. 3 N-linked (GlcNAc...) asparagine glycosylation sites follow: Asn2, Asn17, and Asn26. Intrachain disulfides connect Cys40–Cys279 and Cys271–Cys277. Residues 44 to 69 (LFVSPEVFVTLGVISLLENILVIVAI) form a helical membrane-spanning segment. The Cytoplasmic segment spans residues 70–81 (AKNKNLHSPMYF). The chain crosses the membrane as a helical span at residues 82–106 (FICSLAVADMLVSVSNGSETIVITL). The Ca(2+) site is built by Glu100, Asp122, and Asp126. Residues 107 to 123 (LNSTDTDAQSFTVNIDN) lie on the Extracellular side of the membrane. A helical membrane pass occupies residues 124–145 (VIDSVICSSLLASICSLLSIAV). At 146-165 (DRYFTIFYALQYHNIMTVKR) the chain is on the cytoplasmic side. The chain crosses the membrane as a helical span at residues 166–186 (VGIIISCIWAVCTVSGVLFII). The Extracellular portion of the chain corresponds to 187–191 (YSDSS). The helical transmembrane segment at 192 to 215 (AVIICLITVFFTMLALMASLYVHM) threads the bilayer. Topologically, residues 216-248 (FLMARLHIKRIAVLPGTGTIRQGANMKGAITLT) are cytoplasmic. The helical transmembrane segment at 249 to 271 (ILIGVFVVCWAPFFLHLIFYISC) threads the bilayer. Topologically, residues 272-280 (PQNPYCVCF) are extracellular. The helical transmembrane segment at 281 to 304 (MSHFNLYLILIMCNSIIDPLIYAL) threads the bilayer. Topologically, residues 305 to 332 (RSQELRKTFKEIICCYPLGGLCDLSSRY) are cytoplasmic. Cys318 is lipidated: S-palmitoyl cysteine.

The protein belongs to the G-protein coupled receptor 1 family. Homodimer; disulfide-linked, also forms higher order oligomers. Interacts with GNAS. Interacts with ATRNL1. Interacts with MGRN1; this interaction competes with GNAS-binding and thus inhibits agonist-induced cAMP production. Interacts with MRAP and MRAP2; these associated factors increase ligand-sensitivity and generation of cAMP.

It localises to the cell membrane. In terms of biological role, hormone receptor that acts as a key component of the leptin-melanocortin pathway at the intersection of homeostatic maintenance of energetic state. Plays a role in regulating food intake: activation by a stimulating hormone such as anorexigenic alpha-melanocyte stimulating hormone (alpha-MSH) inhibits appetite, whereas binding to a natural antagonist like Agouti-related protein/AGRP promotes appetite. G-protein-coupled receptor that activates conventional Galphas signaling leading to induction of anorexogenic signaling in the hypothalamus to result in negative energy balance. Regulates the firing activity of neurons from the hypothalamus by alpha-MSH and AGRP independently of Galphas signaling by ligand-induced coupling of closure of inwardly rectifying potassium channel KCNJ13. In intestinal epithelial cells, plays a role in the inhibition of hepatic glucose production via nesfatin-1/NUCB2 leading to increased cyclic adenosine monophosphate (cAMP) levels and glucagon-like peptide 1 (GLP-1) secretion in the intestinal epithelium. The chain is Melanocortin receptor 4 (MC4R) from Sus scrofa (Pig).